The primary structure comprises 113 residues: Large ribosomal subunit protein uL24 (113 aa).

The protein belongs to the universal ribosomal protein uL24 family. As to quaternary structure, part of the 50S ribosomal subunit.

Its function is as follows. One of two assembly initiator proteins, it binds directly to the 5'-end of the 23S rRNA, where it nucleates assembly of the 50S subunit. One of the proteins that surrounds the polypeptide exit tunnel on the outside of the subunit. In Micrococcus luteus (Micrococcus lysodeikticus), this protein is Large ribosomal subunit protein uL24.